We begin with the raw amino-acid sequence, 502 residues long: Cytochrome P450 monooxygenase orf6 (502 aa).

The helical transmembrane segment at 3–25 (ALWVLAVALVAYFLCLSIYRLFL) threads the bilayer. A glycan (N-linked (GlcNAc...) asparagine) is linked at asparagine 382. Cysteine 445 lines the heme pocket.

Belongs to the cytochrome P450 family. Heme is required as a cofactor.

It localises to the membrane. It participates in mycotoxin biosynthesis. Its function is as follows. Cytochrome P450 monooxygenase; part of the gene cluster that mediates the biosynthesis of brefeldin A (BFA), a protein transport inhibitor that shows antiviral, antifungal, and antitumor properties. The proposed biosynthesis of BFA involves formation of an acyclic polyketide chain that is differentially tailored throughout the backbone. The highly reducing polyketide synthase Bref-PKS is proposed to synthesize the precisely reduced octaketide precursor, which could then be directly offloaded by the thiohydrolase enzyme Bref-TH followed by a cytochrome P450 monooxygenase-mediated formation of the cyclopentane ring and macrocyclization to afford 7-deoxy BFA. Alternatively, the first ring annulation can also occur on the ACP-tethered intermediate before the thiohydrolase release and lactonization. The C7-hydroxylation by another cytochrome P450 monooxygenase is believed to be the final step in the process to obtain the final structure of BFA. In addition to the HRPKS Bref-PKS and the thiohydrolase Bref-TH, the brefeldin A biosynthesis cluster contains 4 cytochrome p450 monooxygenases (called orf3 to orf6), as well a the probable cluster-specific transcription regulator orf8. The protein is Cytochrome P450 monooxygenase orf6 of Eupenicillium brefeldianum (Penicillium brefeldianum).